The chain runs to 604 residues: Serine protease 56 (604 aa).

The N-terminal stretch at 1-22 is a signal peptide; it reads MPLAMLLLLLLLLSPDSQTAHG. The interval 70–94 is disordered; sequence CQGPGRPRPQAPLLQDPPEPVQCGE. The segment covering 75–89 has biased composition (pro residues); it reads RPRPQAPLLQDPPEP. An N-linked (GlcNAc...) asparagine glycan is attached at Asn101. A Peptidase S1 domain is found at 109 to 341; that stretch reads IVGGSTAPSG…FKDWLQEQMS (233 aa). A disulfide bond links Cys134 and Cys150. Catalysis depends on charge relay system residues His149 and Asp195. Disulfide bonds link Cys229–Cys296, Cys260–Cys275, and Cys286–Cys317. Ser290 serves as the catalytic Charge relay system. Disordered regions lie at residues 424–452 and 578–604; these read RPGL…PREQ and PQAP…PPVP.

This sequence belongs to the peptidase S1 family. In terms of tissue distribution, expressed in the eye: present in the retina and in the optic nerve.

Its subcellular location is the endoplasmic reticulum membrane. Functionally, serine protease required during eye development. This is Serine protease 56 (Prss56) from Mus musculus (Mouse).